A 386-amino-acid polypeptide reads, in one-letter code: Probable copper-dependent oxygenase M1 (386 aa).

The N-terminal stretch at 1–22 (MLRMKKICTAFLTIALCTHVLA) is a signal peptide. Residue N86 is glycosylated (N-linked (GlcNAc...) asparagine). A helical transmembrane segment spans residues 334–354 (FVVPIAAIAFIALTIGAGYVF).

The protein belongs to the clz3 oxygenase family.

The protein resides in the membrane. It participates in secondary metabolite biosynthesis. In terms of biological role, probable copper-dependent oxygenase; part of the gene cluster that mediates the biosynthesis of squalestatin S1 (SQS1, also known as zaragozic acid A), a heavily oxidized fungal polyketide that offers potent cholesterol lowering activity by targeting squalene synthase (SS). SQS1 is composed of a 2,8-dioxobicyclic[3.2.1]octane-3,4,5-tricarboxyclic acid core that is connected to two lipophilic polyketide arms. These initial steps feature the priming of an unusual benzoic acid starter unit onto the highly reducing polyketide synthase pks2, followed by oxaloacetate extension and product release to generate a tricarboxylic acid containing product. The phenylalanine ammonia lyase (PAL) M7 and the acyl-CoA ligase M9 are involved in transforming phenylalanine into benzoyl-CoA. The citrate synthase-like protein R3 is involved in connecting the C-alpha-carbons of the hexaketide chain and oxaloacetate to afford the tricarboxylic acid unit. The potential hydrolytic enzymes, M8 and M10, are in close proximity to pks2 and may participate in product release. On the other side, the tetraketide arm is synthesized by a the squalestatin tetraketide synthase pks1 and enzymatically esterified to the core in the last biosynthetic step, by the acetyltransferase M4. The biosynthesis of the tetraketide must involve 3 rounds of chain extension. After the first and second rounds methyl-transfer occurs, and in all rounds of extension the ketoreductase and dehydratase are active. The enoyl reductase and C-MeT of pks1 are not active in the final round of extension. The acetyltransferase M4 appears to have a broad substrate selectivity for its acyl CoA substrate, allowing the in vitro synthesis of novel squalestatins. The biosynthesis of SQS1 requires several oxidative steps likely performed by oxidoreductases M1, R1 and R2. Finally, in support of the identification of the cluster as being responsible for SQS1 production, the cluster contains a gene encoding a putative squalene synthase (SS) R6, suggesting a likely mechanism for self-resistance. This is Probable copper-dependent oxygenase M1 from Phoma sp. (strain ATCC 20986 / MF5453).